A 352-amino-acid polypeptide reads, in one-letter code: Large ribosomal subunit protein uL5m (352 aa).

The tract at residues 28 to 109 (STQTGAGAAA…HPIQSPPSSD (82 aa)) is disordered. Positions 63-80 (EEDKKEFRPWKRAADRKA) are enriched in basic and acidic residues.

It belongs to the universal ribosomal protein uL5 family. In terms of assembly, component of the mitochondrial large ribosomal subunit (mt-LSU). Mature N.crassa 74S mitochondrial ribosomes consist of a small (37S) and a large (54S) subunit. The 37S small subunit contains a 16S ribosomal RNA (16S mt-rRNA) and 32 different proteins. The 54S large subunit contains a 23S rRNA (23S mt-rRNA) and 42 different proteins. Unlike bacterial L5, uL5m does not bind zinc.

The protein resides in the mitochondrion. Functionally, component of the mitochondrial ribosome (mitoribosome), a dedicated translation machinery responsible for the synthesis of mitochondrial genome-encoded proteins, including at least some of the essential transmembrane subunits of the mitochondrial respiratory chain. The mitoribosomes are attached to the mitochondrial inner membrane and translation products are cotranslationally integrated into the membrane. In Neurospora crassa (strain ATCC 24698 / 74-OR23-1A / CBS 708.71 / DSM 1257 / FGSC 987), this protein is Large ribosomal subunit protein uL5m (mrpl7).